An 86-amino-acid chain; its full sequence is Large ribosomal subunit protein bL27 (86 aa).

The segment covering 1 to 10 (MAQKKGGGST) has biased composition (gly residues). Residues 1–21 (MAQKKGGGSTRNGRDSESKRL) form a disordered region.

Belongs to the bacterial ribosomal protein bL27 family.

The polypeptide is Large ribosomal subunit protein bL27 (Cupriavidus pinatubonensis (strain JMP 134 / LMG 1197) (Cupriavidus necator (strain JMP 134))).